An 817-amino-acid chain; its full sequence is Dual specificity tyrosine-phosphorylation-regulated kinase mbk-2 (817 aa).

Disordered regions lie at residues 1–46, 70–148, 186–206, and 301–396; these read MAAL…HECP, PTSF…GPLG, GSYE…GSQQ, and LPNV…FRPE. The segment covering 7-25 has biased composition (polar residues); that stretch reads FTRNSRSYGQQPIDVTQQG. 2 stretches are compositionally biased toward low complexity: residues 70 to 81 and 97 to 111; these read PTSFSGASSSSS and NLLG…SNSL. Composition is skewed to polar residues over residues 122-143 and 193-206; these read SGNT…TNNL and GQAQ…GSQQ. Low complexity predominate over residues 303–318; that stretch reads NVGTSSSNGSSNSSSG. Positions 327-351 are enriched in polar residues; that stretch reads LMTQSIGGPNKHLSASHSTLNTAST. Position 362 is a phosphoserine; by cdk-1 (Ser-362). The segment covering 364–392 has biased composition (low complexity); that stretch reads SNESLSRSHTSSSGGSQGGHNSNSGSNSG. Residues 461–774 form the Protein kinase domain; that stretch reads YEVLKVIGKG…PAQALKHKWL (314 aa). Residues 467–475 and Lys-490 contribute to the ATP site; that span reads IGKGSFGQV. Asp-587 (proton acceptor) is an active-site residue. Tyr-621 carries the phosphotyrosine; by autocatalysis modification.

Belongs to the protein kinase superfamily. CMGC Ser/Thr protein kinase family. MNB/DYRK subfamily. In terms of assembly, part of a complex, consisting of pseudophosphatases egg-3, egg-4, egg-5 and kinase mbk-2; this complex is required for the oocyte-to-zygote transition. Interacts (via Tyr-619 and Tyr-621) with egg-4 (via tyrosine-protein phosphatase domain) and egg-5 (via tyrosine-protein phosphatase domain); mbk-2 tyrosine phosphorylation enhances the interaction. The interaction inhibits mbk-2 kinase activity and is required for mbk-2 oocyte cortex localization. Interacts (via N-terminus) with egg-3 (via tyrosine-protein phosphatase domain); the interaction does not affect mbk-2 kinase activity, is enhanced by mbk-2 tyrosine phosphorylation status and requires prior binding of mbk-2 to egg-4 and egg-5. The cofactor is Mg(2+). Autophosphorylated. In terms of tissue distribution, in L1 larvae, expressed widely in the nervous system, including head neurons and the ventral nerve cord. In adult animals, continues to be expressed in the nervous system and is also expressed in body wall muscle.

The protein resides in the cytoplasm. The protein localises to the cell cortex. It catalyses the reaction L-seryl-[protein] + ATP = O-phospho-L-seryl-[protein] + ADP + H(+). It carries out the reaction L-threonyl-[protein] + ATP = O-phospho-L-threonyl-[protein] + ADP + H(+). The enzyme catalyses L-tyrosyl-[protein] + ATP = O-phospho-L-tyrosyl-[protein] + ADP + H(+). Activated during oocyte maturation by phosphorylation on Ser-362 by cdk-1. The pseudotyrosine phosphatases egg-4 and egg-5 sequester activated mbk-2 until the meiotic divisions and inhibit mbk-2 kinase activity directly, using a mixed-inhibition mechanism that does not involve tyrosine dephosphorylation. In terms of biological role, required for oocyte-to-zygote transition in which it phosphorylates oocyte proteins, including mei-1, oma-1, oma-2, mex-5, and mex-6, modifying their activity and/or stability following meiosis. Through phosphorylation of P granule components including meg-1, promotes the disassembly of zygotic P granules in the anterior cytoplasm during zygote polarization, and thus plays a role in P granule distribution and segregation in early stage embryos following meiosis. Functions in both spindle positioning and in the posterior localization of cytoplasmic determinants, including pie-1, pos-1, and pgl-1, in early embryos. Involved in the asymmetric distribution of plk-1 at the 2-cell embryonic stage. The chain is Dual specificity tyrosine-phosphorylation-regulated kinase mbk-2 from Caenorhabditis elegans.